An 888-amino-acid chain; its full sequence is CRISPR-associated endonuclease/helicase Cas3 (888 aa).

One can recognise an HD Cas3-type domain in the interval 20 to 231; the sequence is KGNDIHLLIY…AGFCSLADWL (212 aa). 2 residues coordinate Mg(2+): D75 and H160. The Helicase ATP-binding domain occupies 301–504; the sequence is DALPVAPGLT…LDTYGLHTDP (204 aa). 314 to 321 lines the ATP pocket; the sequence is APTGSGKT. The short motif at 452 to 455 is the DEAH box element; it reads DEVH. One can recognise a Helicase C-terminal domain in the interval 556 to 735; that stretch reads MLERMIAAAN…AYRQWLDSIY (180 aa).

The protein in the N-terminal section; belongs to the CRISPR-associated nuclease Cas3-HD family. It in the central section; belongs to the CRISPR-associated helicase Cas3 family. Interacts with the CasA subunit of Cascade once Cascade has recognized target DNA. Requires Mg(2+) as cofactor.

In terms of biological role, CRISPR (clustered regularly interspaced short palindromic repeat), is an adaptive immune system that provides protection against mobile genetic elements (viruses, transposable elements and conjugative plasmids). CRISPR clusters contain sequences complementary to antecedent mobile elements and target invading nucleic acids. CRISPR clusters are transcribed and processed into CRISPR RNA (crRNA). Cas3 plus Cascade participate in CRISPR interference, the third stage of CRISPR immunity. Acts as an endonuclease, a 3'-5'exonuclease, and an ATP-dependent dsDNA helicase. Anneals and unwinds R-loops (in which crRNA binds the target DNA, displacing the noncomplementary strand). Unwinding requires ATP, annealing does not. Required along with the Cascade complex for resistance to bacteriophage lambda infection as well as the ability to cure CRISPR-encoding high-copy number plasmid. A Cas3-CasA fusion protein purified with the Cascade complex nicks target plasmid in the presence but not absence of Mg(2+), and degrades plasmid fully in the presence of Mg(2+) and ATP, suggesting the helicase activity is required for complete degradation. The polypeptide is CRISPR-associated endonuclease/helicase Cas3 (ygcB) (Escherichia coli (strain K12)).